A 382-amino-acid chain; its full sequence is D-galactonate dehydratase (382 aa).

D183 is a Mg(2+) binding site. Catalysis depends on H185, which acts as the Proton donor. Positions 209 and 235 each coordinate Mg(2+). H285 (proton acceptor) is an active-site residue.

The protein belongs to the mandelate racemase/muconate lactonizing enzyme family. GalD subfamily. Mg(2+) serves as cofactor.

The enzyme catalyses D-galactonate = 2-dehydro-3-deoxy-D-galactonate + H2O. The protein operates within carbohydrate acid metabolism; D-galactonate degradation; D-glyceraldehyde 3-phosphate and pyruvate from D-galactonate: step 1/3. Catalyzes the dehydration of D-galactonate to 2-keto-3-deoxy-D-galactonate. This Escherichia coli (strain 55989 / EAEC) protein is D-galactonate dehydratase.